We begin with the raw amino-acid sequence, 149 residues long: UPF0756 membrane protein Nther_1957 (149 aa).

The next 4 membrane-spanning stretches (helical) occupy residues 5 to 25, 52 to 72, 85 to 105, and 111 to 131; these read IVVL…LVAT, LGIL…DIMP, LIAV…VELL, and VMVG…GVPA.

This sequence belongs to the UPF0756 family.

The protein resides in the cell membrane. This Natranaerobius thermophilus (strain ATCC BAA-1301 / DSM 18059 / JW/NM-WN-LF) protein is UPF0756 membrane protein Nther_1957.